A 154-amino-acid chain; its full sequence is Ascorbate-specific PTS system EIIA component (154 aa).

Residues S6–T150 enclose the PTS EIIA type-2 domain. H68 (tele-phosphohistidine intermediate) is an active-site residue. H68 is modified (phosphohistidine).

It localises to the cytoplasm. Functionally, the phosphoenolpyruvate-dependent sugar phosphotransferase system (sugar PTS), a major carbohydrate active transport system, catalyzes the phosphorylation of incoming sugar substrates concomitantly with their translocation across the cell membrane. The enzyme II UlaABC PTS system is involved in ascorbate transport. This Salmonella choleraesuis (strain SC-B67) protein is Ascorbate-specific PTS system EIIA component (ulaC).